A 213-amino-acid polypeptide reads, in one-letter code: Thymidylate kinase (213 aa).

Residue 10-17 (GLEGAGKT) participates in ATP binding.

It belongs to the thymidylate kinase family.

The catalysed reaction is dTMP + ATP = dTDP + ADP. Functionally, phosphorylation of dTMP to form dTDP in both de novo and salvage pathways of dTTP synthesis. In Escherichia fergusonii (strain ATCC 35469 / DSM 13698 / CCUG 18766 / IAM 14443 / JCM 21226 / LMG 7866 / NBRC 102419 / NCTC 12128 / CDC 0568-73), this protein is Thymidylate kinase.